The primary structure comprises 79 residues: Conotoxin Vi6.1 (79 aa).

Residues 1 to 22 (MKLTCVLIITVLFLTASQLITA) form the signal peptide. A propeptide spanning residues 23–47 (DYSRDQRQYRAVRLGDEMRNFKGAR) is cleaved from the precursor. Intrachain disulfides connect Cys49–Cys62, Cys56–Cys67, and Cys61–Cys77. 2 positions are modified to 4-hydroxyproline: Pro60 and Pro63.

In terms of tissue distribution, expressed by the venom duct.

Its subcellular location is the secreted. Functionally, ion channel inhibitor that inhibits the increase in intracellular calcium upon depolarization in DRG neurons. In vivo, both intraperitoneal and intracranial injections into mice induce hyperactivity. The sequence is that of Conotoxin Vi6.1 from Conus virgo (Virgin cone).